A 388-amino-acid chain; its full sequence is Succinate--CoA ligase [ADP-forming] subunit beta (388 aa).

The ATP-grasp domain occupies 9-244 (KQLFARYGLP…QSQEDPREAQ (236 aa)). Residues Lys-46, 53–55 (GRG), Glu-99, Thr-102, and Glu-107 contribute to the ATP site. Residues Asn-199 and Asp-213 each contribute to the Mg(2+) site. Substrate contacts are provided by residues Asn-264 and 321–323 (GIV).

The protein belongs to the succinate/malate CoA ligase beta subunit family. In terms of assembly, heterotetramer of two alpha and two beta subunits. It depends on Mg(2+) as a cofactor.

It carries out the reaction succinate + ATP + CoA = succinyl-CoA + ADP + phosphate. It catalyses the reaction GTP + succinate + CoA = succinyl-CoA + GDP + phosphate. It participates in carbohydrate metabolism; tricarboxylic acid cycle; succinate from succinyl-CoA (ligase route): step 1/1. In terms of biological role, succinyl-CoA synthetase functions in the citric acid cycle (TCA), coupling the hydrolysis of succinyl-CoA to the synthesis of either ATP or GTP and thus represents the only step of substrate-level phosphorylation in the TCA. The beta subunit provides nucleotide specificity of the enzyme and binds the substrate succinate, while the binding sites for coenzyme A and phosphate are found in the alpha subunit. In Salmonella dublin (strain CT_02021853), this protein is Succinate--CoA ligase [ADP-forming] subunit beta.